The chain runs to 265 residues: Diphthine synthase (265 aa).

S-adenosyl-L-methionine is bound by residues L10, D87, V90, 115-116, L166, A209, and H234; that span reads SI.

The protein belongs to the diphthine synthase family. In terms of assembly, homodimer.

It catalyses the reaction 2-[(3S)-amino-3-carboxypropyl]-L-histidyl-[translation elongation factor 2] + 3 S-adenosyl-L-methionine = diphthine-[translation elongation factor 2] + 3 S-adenosyl-L-homocysteine + 3 H(+). It functions in the pathway protein modification; peptidyl-diphthamide biosynthesis. Functionally, S-adenosyl-L-methionine-dependent methyltransferase that catalyzes the trimethylation of the amino group of the modified target histidine residue in translation elongation factor 2 (EF-2), to form an intermediate called diphthine. The three successive methylation reactions represent the second step of diphthamide biosynthesis. This is Diphthine synthase from Pyrococcus horikoshii (strain ATCC 700860 / DSM 12428 / JCM 9974 / NBRC 100139 / OT-3).